A 213-amino-acid polypeptide reads, in one-letter code: Imidazole glycerol phosphate synthase subunit HisH (213 aa).

Residues 6–213 enclose the Glutamine amidotransferase type-1 domain; that stretch reads LVTVIDYGMG…FKNFLNWNGQ (208 aa). The Nucleophile role is filled by C86. Active-site residues include H192 and E194.

As to quaternary structure, heterodimer of HisH and HisF.

It localises to the cytoplasm. It carries out the reaction 5-[(5-phospho-1-deoxy-D-ribulos-1-ylimino)methylamino]-1-(5-phospho-beta-D-ribosyl)imidazole-4-carboxamide + L-glutamine = D-erythro-1-(imidazol-4-yl)glycerol 3-phosphate + 5-amino-1-(5-phospho-beta-D-ribosyl)imidazole-4-carboxamide + L-glutamate + H(+). The catalysed reaction is L-glutamine + H2O = L-glutamate + NH4(+). It functions in the pathway amino-acid biosynthesis; L-histidine biosynthesis; L-histidine from 5-phospho-alpha-D-ribose 1-diphosphate: step 5/9. Functionally, IGPS catalyzes the conversion of PRFAR and glutamine to IGP, AICAR and glutamate. The HisH subunit catalyzes the hydrolysis of glutamine to glutamate and ammonia as part of the synthesis of IGP and AICAR. The resulting ammonia molecule is channeled to the active site of HisF. This Hydrogenovibrio crunogenus (strain DSM 25203 / XCL-2) (Thiomicrospira crunogena) protein is Imidazole glycerol phosphate synthase subunit HisH.